The sequence spans 545 residues: CTP synthase (545 aa).

The segment at 1–266 (MTTNYIFVTG…DDYICKRFSL (266 aa)) is amidoligase domain. S14 provides a ligand contact to CTP. S14 contributes to the UTP binding site. ATP-binding positions include 15–20 (SLGKGI) and D72. Mg(2+) contacts are provided by D72 and E140. CTP contacts are provided by residues 147–149 (DIE), 187–192 (KTKPTQ), and K223. UTP-binding positions include 187–192 (KTKPTQ) and K223. 239-241 (KDV) contacts ATP. In terms of domain architecture, Glutamine amidotransferase type-1 spans 291-542 (TIGMVGKYIE…VKAASEYQKR (252 aa)). G352 contacts L-glutamine. Residue C379 is the Nucleophile; for glutamine hydrolysis of the active site. L-glutamine is bound by residues 380-383 (LGMQ), E403, and R470. Residues H515 and E517 contribute to the active site.

This sequence belongs to the CTP synthase family. Homotetramer.

It carries out the reaction UTP + L-glutamine + ATP + H2O = CTP + L-glutamate + ADP + phosphate + 2 H(+). The catalysed reaction is L-glutamine + H2O = L-glutamate + NH4(+). The enzyme catalyses UTP + NH4(+) + ATP = CTP + ADP + phosphate + 2 H(+). It functions in the pathway pyrimidine metabolism; CTP biosynthesis via de novo pathway; CTP from UDP: step 2/2. With respect to regulation, allosterically activated by GTP, when glutamine is the substrate; GTP has no effect on the reaction when ammonia is the substrate. The allosteric effector GTP functions by stabilizing the protein conformation that binds the tetrahedral intermediate(s) formed during glutamine hydrolysis. Inhibited by the product CTP, via allosteric rather than competitive inhibition. In terms of biological role, catalyzes the ATP-dependent amination of UTP to CTP with either L-glutamine or ammonia as the source of nitrogen. Regulates intracellular CTP levels through interactions with the four ribonucleotide triphosphates. This Klebsiella pneumoniae subsp. pneumoniae (strain ATCC 700721 / MGH 78578) protein is CTP synthase.